Reading from the N-terminus, the 712-residue chain is Polyribonucleotide nucleotidyltransferase (712 aa).

Mg(2+)-binding residues include Asp-487 and Asp-493. A KH domain is found at 554–613; it reads PRIHTMKISVEKIKDVIGKGGAVIRQLTEETGTTIEIEDDGTIKIAATDGDQAKEAIRRI. The S1 motif domain maps to 623 to 691; that stretch reads GVIYTGKVAR…RQGRVRLSMK (69 aa).

It belongs to the polyribonucleotide nucleotidyltransferase family. In terms of assembly, component of the RNA degradosome, which is a multiprotein complex involved in RNA processing and mRNA degradation. It depends on Mg(2+) as a cofactor.

The protein localises to the cytoplasm. The enzyme catalyses RNA(n+1) + phosphate = RNA(n) + a ribonucleoside 5'-diphosphate. Its function is as follows. Involved in mRNA degradation. Catalyzes the phosphorolysis of single-stranded polyribonucleotides processively in the 3'- to 5'-direction. The protein is Polyribonucleotide nucleotidyltransferase of Vibrio cholerae serotype O1 (strain ATCC 39541 / Classical Ogawa 395 / O395).